A 465-amino-acid chain; its full sequence is ATP-dependent protease ATPase subunit HslU (465 aa).

Residues valine 20, glycine 62–glutamate 67, aspartate 277, glutamate 343, and arginine 415 each bind ATP.

It belongs to the ClpX chaperone family. HslU subfamily. In terms of assembly, a double ring-shaped homohexamer of HslV is capped on each side by a ring-shaped HslU homohexamer. The assembly of the HslU/HslV complex is dependent on binding of ATP.

Its subcellular location is the cytoplasm. Its function is as follows. ATPase subunit of a proteasome-like degradation complex; this subunit has chaperone activity. The binding of ATP and its subsequent hydrolysis by HslU are essential for unfolding of protein substrates subsequently hydrolyzed by HslV. HslU recognizes the N-terminal part of its protein substrates and unfolds these before they are guided to HslV for hydrolysis. The protein is ATP-dependent protease ATPase subunit HslU of Geobacillus kaustophilus (strain HTA426).